A 102-amino-acid polypeptide reads, in one-letter code: Integration host factor subunit alpha (102 aa).

Residues 49–70 form a disordered region; the sequence is FGNFQLRTKPQRPGRNPKTGEE.

The protein belongs to the bacterial histone-like protein family. Heterodimer of an alpha and a beta chain.

In terms of biological role, this protein is one of the two subunits of integration host factor, a specific DNA-binding protein that functions in genetic recombination as well as in transcriptional and translational control. The polypeptide is Integration host factor subunit alpha (Nitrosomonas europaea (strain ATCC 19718 / CIP 103999 / KCTC 2705 / NBRC 14298)).